The primary structure comprises 1149 residues: ATP-dependent helicase/deoxyribonuclease subunit B (1149 aa).

Position 8-15 (glycine 8–threonine 15) interacts with ATP. [4Fe-4S] cluster contacts are provided by cysteine 784, cysteine 1102, cysteine 1105, and cysteine 1111.

Belongs to the helicase family. AddB/RexB type 1 subfamily. As to quaternary structure, heterodimer of AddA and AddB. The cofactor is Mg(2+). [4Fe-4S] cluster is required as a cofactor.

The heterodimer acts as both an ATP-dependent DNA helicase and an ATP-dependent, dual-direction single-stranded exonuclease. Recognizes the chi site generating a DNA molecule suitable for the initiation of homologous recombination. The AddB subunit has 5' -&gt; 3' nuclease activity but not helicase activity. The chain is ATP-dependent helicase/deoxyribonuclease subunit B from Thermoanaerobacter pseudethanolicus (strain ATCC 33223 / 39E) (Clostridium thermohydrosulfuricum).